The chain runs to 284 residues: tRNA uridine(34) hydroxylase (284 aa).

Positions 132-226 constitute a Rhodanese domain; the sequence is TGRPVVMLDT…YFEEVGGAHY (95 aa). Cys-186 acts as the Cysteine persulfide intermediate in catalysis.

Belongs to the TrhO family.

The catalysed reaction is uridine(34) in tRNA + AH2 + O2 = 5-hydroxyuridine(34) in tRNA + A + H2O. Its function is as follows. Catalyzes oxygen-dependent 5-hydroxyuridine (ho5U) modification at position 34 in tRNAs. This chain is tRNA uridine(34) hydroxylase, found in Burkholderia cenocepacia (strain ATCC BAA-245 / DSM 16553 / LMG 16656 / NCTC 13227 / J2315 / CF5610) (Burkholderia cepacia (strain J2315)).